The sequence spans 418 residues: Mitochondrial outer membrane protein SLC25A46 (418 aa).

The interval 1 to 30 (MHPRRPDGFDGLGYRGGARDEQGFGGAFPA) is disordered. S32 carries the phosphoserine modification. A disordered region spans residues 44–93 (TTPPDIPGSRNLHWGEKSPPYGVPTTSTPYEGPTEEPFSSGGGGSVQGQS). T45 carries the phosphothreonine modification. The stretch at 96–187 (QLNRFAGFGI…GIISEFTPLP (92 aa)) is one Solcar 1 repeat. A run of 6 helical transmembrane segments spans residues 103-123 (FGIG…CIVL), 167-187 (FIVQ…TPLP), 202-222 (HLLL…ASLI), 258-278 (LLPL…HYII), 314-334 (FPEL…LYPL), and 382-402 (VFGF…HAAV). A Solcar 2 repeat occupies 311-413 (DAYFPELIAN…QITKIIYSTL (103 aa)).

It belongs to the mitochondrial carrier (TC 2.A.29) family. In terms of assembly, associates with the mitochondrial contact site and cristae organizing system (MICOS) complex. May associate with the endoplasmic reticulum membrane protein complex (EMC).

The protein resides in the mitochondrion outer membrane. Functionally, transmembrane protein of the mitochondrial outer membrane that controls mitochondrial organization. May regulate the assembly of the MICOS (mitochondrial contact site and cristae organizing system) complex which is essential to the biogenesis and dynamics of mitochondrial cristae, the inwards folds of the inner mitochondrial membrane. Through its interaction with the EMC (endoplasmic reticulum membrane protein complex), could regulate mitochondrial lipid homeostasis and thereby mitochondrial fission. The polypeptide is Mitochondrial outer membrane protein SLC25A46 (Homo sapiens (Human)).